The sequence spans 213 residues: GTP cyclohydrolase 1 (213 aa).

The Zn(2+) site is built by Cys-104, His-107, and Cys-175.

It belongs to the GTP cyclohydrolase I family. Homomer.

It carries out the reaction GTP + H2O = 7,8-dihydroneopterin 3'-triphosphate + formate + H(+). It functions in the pathway cofactor biosynthesis; 7,8-dihydroneopterin triphosphate biosynthesis; 7,8-dihydroneopterin triphosphate from GTP: step 1/1. This Brucella suis (strain ATCC 23445 / NCTC 10510) protein is GTP cyclohydrolase 1.